The chain runs to 310 residues: Ceramide synthase LOH1 (310 aa).

A run of 6 helical transmembrane segments spans residues 16-36 (SFPT…FPTI), 85-105 (CIYY…EPWF), 131-151 (FLYM…VFWE), 157-177 (FGVS…SYIC), 216-236 (FVLF…FWIL), and 260-280 (YMFN…WVLI). In terms of domain architecture, TLC spans 76–289 (RKFKESAWKC…IYRMLVKQVQ (214 aa)). S300 and S302 each carry phosphoserine.

Expressed ubiquitously at high levels. Not observed in pollen.

The protein resides in the endoplasmic reticulum membrane. It catalyses the reaction (4R)-hydroxysphinganine + a fatty acyl-CoA = an N-acyl-(4R)-4-hydroxysphinganine + CoA + H(+). It carries out the reaction hexacosanoyl-CoA + (4R)-hydroxysphinganine = N-hexacosanoyl-(4R)-hydroxysphinganine + CoA + H(+). The catalysed reaction is tetracosanoyl-CoA + (4R)-hydroxysphinganine = N-tetracosanoyl-(4R)-hydroxysphinganine + CoA + H(+). The protein operates within sphingolipid metabolism. With respect to regulation, inhibited by the mycotoxin fumonisin B(1), a sphingosine analog mycotoxins produced by pathogenic fungi. Repressed by divalent cation such as magnesium Mg(2+), copper Cu(2+), zinc Zn(2+), manganese Mn(2+), calcium Ca(2+) and cobalt Co(2+). Its function is as follows. Essential for plant growth, promotes cell division in root meristems. Catalyzes the biosynthesis of ceramide sphingolipids with C(16) to C(28) fatty acids, structural membrane lipids involved in membrane trafficking (e.g. early endosomes) and cell polarity (e.g. polar auxin transport related proteins); mostly active with t18:0 and saturated very long saturated fatty acids (C24:0 and C26:0), such as long-chain base (LCB) phytosphingosine (t18:0), lignoceroyl- and hexacosanoyl-CoAs. Mediates resistance to sphinganine-analog mycotoxins (SAMs, e.g. fumonisin B(1)) by restoring the sphingolipid biosynthesis. Could salvage the transport of GPI-anchored proteins from the endoplasmic reticulum to the Golgi apparatus in ceramides-depleted cells after SAM exposure. May prevent precocious cell death by delaying PR1 accumulation during aging. Contributes to hypoxic conditions tolerance (e.g. submergences), especially in the dark, by promoting the formation of very-long-chain (VLC) ceramide species (22:1, 24:1 and 26:1) and of VLC unsaturated ceramides, which are modulating CTR1-mediated ethylene signaling leading to endoplasmic reticulum (ER)-to-nucleus translocation of EIN2 and EIN3. The chain is Ceramide synthase LOH1 from Arabidopsis thaliana (Mouse-ear cress).